The following is a 452-amino-acid chain: Probable glycine dehydrogenase (decarboxylating) subunit 1 (452 aa).

The protein belongs to the GcvP family. N-terminal subunit subfamily. As to quaternary structure, the glycine cleavage system is composed of four proteins: P, T, L and H. In this organism, the P 'protein' is a heterodimer of two subunits.

The catalysed reaction is N(6)-[(R)-lipoyl]-L-lysyl-[glycine-cleavage complex H protein] + glycine + H(+) = N(6)-[(R)-S(8)-aminomethyldihydrolipoyl]-L-lysyl-[glycine-cleavage complex H protein] + CO2. The glycine cleavage system catalyzes the degradation of glycine. The P protein binds the alpha-amino group of glycine through its pyridoxal phosphate cofactor; CO(2) is released and the remaining methylamine moiety is then transferred to the lipoamide cofactor of the H protein. The sequence is that of Probable glycine dehydrogenase (decarboxylating) subunit 1 from Alcanivorax borkumensis (strain ATCC 700651 / DSM 11573 / NCIMB 13689 / SK2).